Here is a 234-residue protein sequence, read N- to C-terminus: Orotidine 5'-phosphate decarboxylase (234 aa).

Residues Asp-14, Lys-36, Asp-63–Thr-72, Thr-118, Arg-179, Gln-188, Gly-208, and Arg-209 contribute to the substrate site. Lys-65 functions as the Proton donor in the catalytic mechanism.

Belongs to the OMP decarboxylase family. Type 1 subfamily. As to quaternary structure, homodimer.

It carries out the reaction orotidine 5'-phosphate + H(+) = UMP + CO2. It functions in the pathway pyrimidine metabolism; UMP biosynthesis via de novo pathway; UMP from orotate: step 2/2. In terms of biological role, catalyzes the decarboxylation of orotidine 5'-monophosphate (OMP) to uridine 5'-monophosphate (UMP). The sequence is that of Orotidine 5'-phosphate decarboxylase from Rhizobium meliloti (strain 1021) (Ensifer meliloti).